A 580-amino-acid chain; its full sequence is Glutamine--tRNA ligase (580 aa).

A 'HIGH' region motif is present at residues 41–51 (PEPNGYLHIGH). ATP is bound by residues 42 to 44 (EPN) and 48 to 54 (HIGHAKA). L-glutamine-binding residues include aspartate 74 and tyrosine 218. ATP-binding positions include threonine 237, 285–286 (RL), and 293–295 (MSK). Residues 292–296 (VMSKR) carry the 'KMSKS' region motif.

The protein belongs to the class-I aminoacyl-tRNA synthetase family. Monomer.

The protein resides in the cytoplasm. It catalyses the reaction tRNA(Gln) + L-glutamine + ATP = L-glutaminyl-tRNA(Gln) + AMP + diphosphate. This Xylella fastidiosa (strain Temecula1 / ATCC 700964) protein is Glutamine--tRNA ligase.